A 145-amino-acid chain; its full sequence is Sec-independent protein translocase protein TatB (145 aa).

Residues 1–21 traverse the membrane as a helical segment; it reads MLDVGMTELLCFAIIAILVLG.

Belongs to the TatB family. As to quaternary structure, the Tat system comprises two distinct complexes: a TatABC complex, containing multiple copies of TatA, TatB and TatC subunits, and a separate TatA complex, containing only TatA subunits. Substrates initially bind to the TatABC complex, which probably triggers association of the separate TatA complex to form the active translocon.

Its subcellular location is the cell inner membrane. Functionally, part of the twin-arginine translocation (Tat) system that transports large folded proteins containing a characteristic twin-arginine motif in their signal peptide across membranes. Together with TatC, TatB is part of a receptor directly interacting with Tat signal peptides. TatB may form an oligomeric binding site that transiently accommodates folded Tat precursor proteins before their translocation. In Acinetobacter baumannii (strain ATCC 17978 / DSM 105126 / CIP 53.77 / LMG 1025 / NCDC KC755 / 5377), this protein is Sec-independent protein translocase protein TatB.